Reading from the N-terminus, the 557-residue chain is Copine-6 (557 aa).

C2 domains lie at 1 to 127 and 134 to 263; these read MSDP…TKPL and NAGK…MQWD. Residues Asp167, Asp173, Asp229, Asp231, and Asp237 each coordinate Ca(2+). The segment at 244–303 is linker region; the sequence is STFQEMQEGTANPGQEMQWDCINPKYRDKKKHYKSSGTVVLAQCTVEKVHTFLDYIMGGC. The 221-residue stretch at 306 to 526 folds into the VWFA domain; it reads SFTVAIDFTA…ALAKCVLAEV (221 aa).

Belongs to the copine family. As to quaternary structure, interacts (via second C2 domain) with OS9 (via C-terminus); this interaction occurs in a calcium-dependent manner in vitro. May interact with NECAB1. Ca(2+) is required as a cofactor.

The protein localises to the cytoplasm. The protein resides in the cell membrane. It localises to the endosome. It is found in the cytoplasmic vesicle. Its subcellular location is the clathrin-coated vesicle. The protein localises to the perikaryon. The protein resides in the cell projection. It localises to the dendrite. Its function is as follows. Calcium-dependent phospholipid-binding protein that plays a role in calcium-mediated intracellular processes. Binds phospholipid membranes in a calcium-dependent manner. Plays a role in dendrite formation by melanocytes. This Bos taurus (Bovine) protein is Copine-6.